The chain runs to 484 residues: Glycogen synthase (484 aa).

Position 15 (K15) interacts with ADP-alpha-D-glucose.

The protein belongs to the glycosyltransferase 1 family. Bacterial/plant glycogen synthase subfamily.

It carries out the reaction [(1-&gt;4)-alpha-D-glucosyl](n) + ADP-alpha-D-glucose = [(1-&gt;4)-alpha-D-glucosyl](n+1) + ADP + H(+). Its pathway is glycan biosynthesis; glycogen biosynthesis. Functionally, synthesizes alpha-1,4-glucan chains using ADP-glucose. The sequence is that of Glycogen synthase from Koribacter versatilis (strain Ellin345).